Consider the following 173-residue polypeptide: MPRSNRNDNFIDKSFTVMADLIVKLLPINARSKEAYVYYRDGLSAQNDGDYAEALENYEEALKLEENSTDRSETLKNMAIIYMSNGEEERAIETYRKALEENPNQPSCLKNMGLIYEKWGRIAEEGGEQDSADRWFDQAADVWTQAVRLNPGGYLDIENWLKSTGRSNVDVYF.

TPR repeat units follow at residues 35 to 68 (AYVYYRDGLSAQNDGDYAEALENYEEALKLEENS), 72 to 105 (SETLKNMAIIYMSNGEEERAIETYRKALEENPNQ), and 120 to 153 (GRIAEEGGEQDSADRWFDQAADVWTQAVRLNPGG).

It belongs to the Ycf3 family.

It is found in the cellular thylakoid membrane. Functionally, essential for the assembly of the photosystem I (PSI) complex. May act as a chaperone-like factor to guide the assembly of the PSI subunits. In Synechococcus sp. (strain CC9605), this protein is Photosystem I assembly protein Ycf3.